The primary structure comprises 366 residues: D-alanine--D-alanine ligase (366 aa).

The region spanning 145–348 (KRLLDDAGLA…YQSLITKLIE (204 aa)) is the ATP-grasp domain. 175–230 (VEQLGLPLFIKPANLGSSVGISKVNNEAEFNAALSMAFEYDLKVIIESAIVGREIE) lines the ATP pocket. Mg(2+) contacts are provided by D302, E315, and N317.

The protein belongs to the D-alanine--D-alanine ligase family. The cofactor is Mg(2+). Mn(2+) serves as cofactor.

The protein resides in the cytoplasm. The enzyme catalyses 2 D-alanine + ATP = D-alanyl-D-alanine + ADP + phosphate + H(+). Its pathway is cell wall biogenesis; peptidoglycan biosynthesis. Functionally, cell wall formation. This Proteus mirabilis (strain HI4320) protein is D-alanine--D-alanine ligase.